The primary structure comprises 536 residues: Prickle planar cell polarity protein 3-B (536 aa).

The 110-residue stretch at 66 to 175 folds into the PET domain; sequence SGSQRDSLCD…CVRPISGTMS (110 aa). LIM zinc-binding domains follow at residues 177–241, 242–302, and 305–366; these read TVCQ…ELKR, PRCL…LYAQ, and DSCG…HTKS. Positions 418–536 are disordered; the sequence is PTQAAPARSL…KKKDKSCFLS (119 aa). Over residues 438–448 the composition is skewed to basic and acidic residues; sequence FSRECPNRRSL. A compositionally biased stretch (polar residues) spans 450–467; that stretch reads DLSSHTRTPTRVTFQLPS. The span at 474-487 shows a compositional bias: low complexity; it reads SISFSRPSFTSSSS.

Belongs to the prickle / espinas / testin family. Interacts with vangl2 via its C-terminus. The vangl2-dependent membrane recruitment of prickle3 is a prerequisite for its polarization. Interacts with wtip. Wtip is involved in the recruitment of prickle3 to the basal body.

The protein resides in the cytoplasm. It localises to the cell membrane. The protein localises to the mitochondrion. Functionally, involved in the planar cell polarity (PCP) pathway that is essential for the polarization of epithelial cells during morphogenetic processes, including gastrulation and neurulation. PCP is maintained by two molecular modules, the global and the core modules. Proteins of the core module include the proteins Frizzled (Fz), Disheveled (Dsh), Van Gogh (Vang), Prickle (Pk), Flamingo (Fmi, Celsr) and Diego (Dgo). The core module proteins develop subcellular asymmetry, accumulating in two groups on opposite sides of epithelial cells. Distinct proximal (Vang, Pk and Fmi) and distal (Fz, Dsh, Dgo and Fmi) complexes segregate to opposite sides of the cell, where they interact with the opposite complex in the neighboring cell at or near the adherents junctions. Directional information to orient polarization with respect to the tissue axes is provided by the global module which involves Wnt proteins. Involved in the organization of the basal body. Involved in cilia growth and positioning. Required for proper assembly, stability, and function of mitochondrial membrane ATP synthase (mitochondrial complex V). This chain is Prickle planar cell polarity protein 3-B (prickle3-b), found in Xenopus laevis (African clawed frog).